A 721-amino-acid chain; its full sequence is WD repeat and coiled-coil-containing protein (721 aa).

An N-acetylmethionine modification is found at Met-1. 2 WD repeats span residues 55-98 (GQFE…MESS) and 154-194 (NTQG…LHRC). Phosphoserine is present on residues Ser-299, Ser-468, Ser-501, and Ser-523. The span at 520–537 (QPASLPRHSSTPDHTSTL) shows a compositional bias: polar residues. A disordered region spans residues 520-553 (QPASLPRHSSTPDHTSTLEPPRLPQRKNLQSEKE). Thr-530 carries the post-translational modification Phosphothreonine. The interaction with HCK stretch occupies residues 539–545 (PPRLPQR). Residues 556–584 (QLSKEVEILSRNLVEMQRCLSELTNRLHN) are a coiled coil. A phosphoserine mark is found at Ser-686 and Ser-690.

In terms of assembly, oligomer. Interacts with HCK (via SH3 domain). In terms of processing, phosphorylated on Tyr when associated with HCK.

This is WD repeat and coiled-coil-containing protein from Homo sapiens (Human).